The following is a 365-amino-acid chain: tRNA 2-selenouridine synthase (365 aa).

In terms of domain architecture, Rhodanese spans 15 to 138 (FVNDHPIMDA…MRQFLIETID (124 aa)). Cys98 (S-selanylcysteine intermediate) is an active-site residue.

It belongs to the SelU family. As to quaternary structure, monomer.

It carries out the reaction 5-methylaminomethyl-2-thiouridine(34) in tRNA + selenophosphate + (2E)-geranyl diphosphate + H2O + H(+) = 5-methylaminomethyl-2-selenouridine(34) in tRNA + (2E)-thiogeraniol + phosphate + diphosphate. The enzyme catalyses 5-methylaminomethyl-2-thiouridine(34) in tRNA + (2E)-geranyl diphosphate = 5-methylaminomethyl-S-(2E)-geranyl-thiouridine(34) in tRNA + diphosphate. The catalysed reaction is 5-methylaminomethyl-S-(2E)-geranyl-thiouridine(34) in tRNA + selenophosphate + H(+) = 5-methylaminomethyl-2-(Se-phospho)selenouridine(34) in tRNA + (2E)-thiogeraniol. It catalyses the reaction 5-methylaminomethyl-2-(Se-phospho)selenouridine(34) in tRNA + H2O = 5-methylaminomethyl-2-selenouridine(34) in tRNA + phosphate. In terms of biological role, involved in the post-transcriptional modification of the uridine at the wobble position (U34) of tRNA(Lys), tRNA(Glu) and tRNA(Gln). Catalyzes the conversion of 2-thiouridine (S2U-RNA) to 2-selenouridine (Se2U-RNA). Acts in a two-step process involving geranylation of 2-thiouridine (S2U) to S-geranyl-2-thiouridine (geS2U) and subsequent selenation of the latter derivative to 2-selenouridine (Se2U) in the tRNA chain. This Shewanella halifaxensis (strain HAW-EB4) protein is tRNA 2-selenouridine synthase.